We begin with the raw amino-acid sequence, 911 residues long: Transferrin-binding protein A (911 aa).

The first 24 residues, 1–24 (MQQQHLFRLNILCLSLMTALPAYA), serve as a signal peptide directing secretion. Residues 38 to 45 (DTIQVKAK) carry the TonB box motif. In terms of domain architecture, TBDR plug spans 51-176 (RDNEVTGLGK…LAGSVAFQTK (126 aa)). The 725-residue stretch at 187–911 (QWGIQSKTAY…NYTFSLEMKF (725 aa)) folds into the TBDR beta-barrel domain. Residues 894–911 (NRYAAPGRNYTFSLEMKF) carry the TonB C-terminal box motif.

It belongs to the TonB-dependent receptor family. Binds both human apo- and holo-transferrin (TF), via the TF C-terminus. Forms a large complex with TF and TbpB.

It localises to the cell outer membrane. In terms of biological role, neisseria acquires iron by extracting it from serum transferrin (TF) in its human host. Acts as a TF receptor and is required for TF utilization. Binds both apo- and holo-TF, via the TF C-terminus. This is Transferrin-binding protein A from Neisseria meningitidis serogroup B.